The primary structure comprises 703 residues: RING finger protein 214 (703 aa).

3 disordered regions span residues 1–59 (MAAS…TITK), 104–134 (GSQS…VTRS), and 146–197 (SRNC…SSSL). N-acetylalanine is present on A2. 4 positions are modified to phosphoserine: S15, S40, S47, and S54. The segment covering 37–59 (TKDSAQKQKNSPLLSVSSQTITK) has biased composition (polar residues). S176 and S196 each carry phosphoserine. Residues 220–379 (QDIEKNLDKM…AEKEAELHLT (160 aa)) adopt a coiled-coil conformation. The segment at 486-552 (FPILNPALSQ…SAETPRPQPV (67 aa)) is disordered. The segment covering 493-504 (LSQPSQPSSPLP) has biased composition (low complexity). S497, S511, and S516 each carry phosphoserine. Positions 523–536 (PHMPPAASIPPPPG) are enriched in pro residues. The RING-type; atypical zinc finger occupies 658-700 (CLMCQKLVQPSELHPMACTHVLHKECIKFWAQTNTNDTCPFCP).

In Homo sapiens (Human), this protein is RING finger protein 214 (RNF214).